The sequence spans 89 residues: Large ribosomal subunit protein bL27 (89 aa).

The segment at 1-26 (MATKKAGGSSKNGRDSAGRRLGLKKT) is disordered.

It belongs to the bacterial ribosomal protein bL27 family.

The chain is Large ribosomal subunit protein bL27 from Orientia tsutsugamushi (strain Boryong) (Rickettsia tsutsugamushi).